Reading from the N-terminus, the 69-residue chain is Small integral membrane protein 20 (69 aa).

The Mitochondrial matrix segment spans residues 1–8; it reads MAAARNLR. Residues 9-29 form a helical membrane-spanning segment; sequence TALIFGGFISMVGAAFYPIYF. Over 30-69 the chain is Mitochondrial intermembrane; the sequence is RPLMRLEEYQKEQAVNRAGIVQEDVQPPGLKVWSDPFGRK. At Phe-66 the chain carries Phenylalanine amide.

As to quaternary structure, component of the MITRAC (mitochondrial translation regulation assembly intermediate of cytochrome c oxidase complex) complex, the core components of this complex being COA3/MITRAC12 and COX14. Interacts with COA3/MITRAC12 and COX4I1. Directly interacts with newly synthesized MT-CO1/COX1. Highly expressed in the hypothalamus, the spinal cord, and sensory ganglia (at protein level). Also expressed on in the epidermis and dermis layers of the skin (at protein level). Expressed in preadipocytes and adipocytes (at protein level). Expressed in the ovary, specifically in granulosa cells of follicles that have passed the primary stage and in oocytes (at protein level).

It localises to the mitochondrion inner membrane. The protein resides in the secreted. Functionally, component of the MITRAC (mitochondrial translation regulation assembly intermediate of cytochrome c oxidase complex) complex, that regulates cytochrome c oxidase assembly. Promotes the progression of complex assembly after the association of MT-CO1/COX1 with COX4I1 and COX6C. Chaperone-like assembly factor required to stabilize newly synthesized MT-CO1/COX1 and to prevent its premature turnover. In terms of biological role, peptide involved in a broad spectrum of regulatory functions. Is a ligand for GPR173. As part of the reproductive cycle, it regulates gonadotropin-releasing hormone (GnRH) signaling in the hypothalamus and pituitary gland which augments the release of luteinizing hormone. More specifically, it regulates the expression of transcription factors CEBPB and POU2F1/OCT1 through the cAMP-PKA signaling pathway, which subsequently regulate the expression of GNRHR and KISS1. Plays a protective role in memory retention through activation of GNRHR. Regulates the secretion of AVP by hypothalamic neurons. Plays a role in the transduction of the itch sensation. Induces anxiolytic effects, reducing behavior associated with anxiety. Regulates food intake as well as satiation and satiety by increasing Nucb2 expression in neurons. In the ovary, it regulates follicular growth by stimulating granulosa cell proliferation by increasing the expression of GPR173, CREB1, CYP19A1, KITLG, FSHR, and LHCGR. It also increases the production of estradiol (E2). In the heart, it regulates contractility and relaxation by activating the AKT1-NOS3 and MAPK1-MAPK3 signaling pathways. It also plays a cardioprotective role during ischemia, where it activates the SAFE and RISK pathways. Stimulates the proliferation and differentiation of preadipocytes. In pancreatic islet cells, it induces proliferation of islet cells as well as the production of INS through activation of the MAPK1-MAPK3 signaling pathways. This is Small integral membrane protein 20 from Mus musculus (Mouse).